Consider the following 373-residue polypeptide: UDP-N-acetylglucosamine--N-acetylmuramyl-(pentapeptide) pyrophosphoryl-undecaprenol N-acetylglucosamine transferase (373 aa).

Residues 14-16 (TAG), Asn-128, Arg-165, Ser-199, and Gln-295 each bind UDP-N-acetyl-alpha-D-glucosamine.

Belongs to the glycosyltransferase 28 family. MurG subfamily.

Its subcellular location is the cell membrane. It catalyses the reaction di-trans,octa-cis-undecaprenyl diphospho-N-acetyl-alpha-D-muramoyl-L-alanyl-D-glutamyl-meso-2,6-diaminopimeloyl-D-alanyl-D-alanine + UDP-N-acetyl-alpha-D-glucosamine = di-trans,octa-cis-undecaprenyl diphospho-[N-acetyl-alpha-D-glucosaminyl-(1-&gt;4)]-N-acetyl-alpha-D-muramoyl-L-alanyl-D-glutamyl-meso-2,6-diaminopimeloyl-D-alanyl-D-alanine + UDP + H(+). It functions in the pathway cell wall biogenesis; peptidoglycan biosynthesis. Its function is as follows. Cell wall formation. Catalyzes the transfer of a GlcNAc subunit on undecaprenyl-pyrophosphoryl-MurNAc-pentapeptide (lipid intermediate I) to form undecaprenyl-pyrophosphoryl-MurNAc-(pentapeptide)GlcNAc (lipid intermediate II). This is UDP-N-acetylglucosamine--N-acetylmuramyl-(pentapeptide) pyrophosphoryl-undecaprenol N-acetylglucosamine transferase from Mycobacterium sp. (strain KMS).